A 524-amino-acid chain; its full sequence is MVPPRHHPGAGRPGALSSSPPFRLRSSKFSGIALQDLRKAFKIRLQMVCVFIMNRMNSQSSGFTQRKRMALGIVILLLVDVIWVASSELTSYVFTQYNKPFFSTFAKTSMFVLYLLGFIVWKPWRQQCTRGFRGKHATFFADAEGYFAACTTDTTMNSSLSEPLYVPVKFHDLPSEKPENTNIDTEKIPKKSRVRFSNIMEIRQLPSSHALEAKLSRMSYPTVKEQESLLKTVGKLTATQVAKISFFFCFVWFLANFSYQEALSDTQVAIVNILSSTSGLFTLILAAMFPSNSGDRFTLSKLLAVILSIGGVVLVNLSGSEKSPGRNTIGSIWSLVGAMLYAVYIVMIKRKVDREDKLDIPMFFGFVGLFNLLLLWPGFFLLHYTGFEDFEFPNKVVLMCIVINGLIGTVLSEFLWLWGCFLTSSLIGTLALSLTIPLSIIADMCMQKVQFSWLFFAGAIPVFFSFFIATLLCHYNNWDPVMVGIRRIFAFICRKHRIQKVPEDSEQCESLIPMHGVSQEDGAS.

The segment at 1 to 22 is disordered; it reads MVPPRHHPGAGRPGALSSSPPF. Over residues 13–22 the composition is skewed to low complexity; sequence PGALSSSPPF. A run of 2 helical transmembrane segments spans residues 69–89 and 101–121; these read MALG…SSEL and FFST…FIVW. A Phosphoserine modification is found at serine 207. 8 consecutive transmembrane segments (helical) span residues 244-264, 269-289, 297-317, 328-348, 362-382, 396-416, 421-441, and 453-473; these read ISFF…EALS, AIVN…AAMF, FTLS…LVNL, TIGS…IVMI, MFFG…FFLL, VVLM…EFLW, FLTS…LSII, and WLFF…TLLC. The region spanning 253–317 is the EamA domain; the sequence is FLANFSYQEA…SIGGVVLVNL (65 aa).

This sequence belongs to the SLC35F solute transporter family.

It is found in the membrane. Its function is as follows. Putative solute transporter. The polypeptide is Solute carrier family 35 member F5 (SLC35F5) (Bos taurus (Bovine)).